The sequence spans 37 residues: Large ribosomal subunit protein bL36 (37 aa).

It belongs to the bacterial ribosomal protein bL36 family.

The polypeptide is Large ribosomal subunit protein bL36 (Gloeothece citriformis (strain PCC 7424) (Cyanothece sp. (strain PCC 7424))).